A 225-amino-acid chain; its full sequence is Ribonuclease 3 (225 aa).

Residues 7-129 enclose the RNase III domain; it reads MPRLCRTLGY…IIGAVYIDSG (123 aa). Position 42 (E42) interacts with Mg(2+). Residue D46 is part of the active site. D115 and E118 together coordinate Mg(2+). The active site involves E118. One can recognise a DRBM domain in the interval 155 to 225; the sequence is DPKTLLQELL…AADALELMKR (71 aa).

This sequence belongs to the ribonuclease III family. In terms of assembly, homodimer. Mg(2+) is required as a cofactor.

It is found in the cytoplasm. The catalysed reaction is Endonucleolytic cleavage to 5'-phosphomonoester.. Digests double-stranded RNA. Involved in the processing of primary rRNA transcript to yield the immediate precursors to the large and small rRNAs (23S and 16S). Processes some mRNAs, and tRNAs when they are encoded in the rRNA operon. Processes pre-crRNA and tracrRNA of type II CRISPR loci if present in the organism. The polypeptide is Ribonuclease 3 (Shewanella sediminis (strain HAW-EB3)).